The following is a 455-amino-acid chain: GTPase Der (455 aa).

2 EngA-type G domains span residues 3–167 (FTIA…PEPA) and 184–359 (IRVA…AVWN). Residues 9–16 (GRPNVGKS), 56–60 (DTAGL), 119–122 (NKSE), 190–197 (GRPNAGKS), 237–241 (DTAGL), and 302–305 (NKWD) contribute to the GTP site. Positions 360-444 (RRVATALLNR…PIRITLREKA (85 aa)) constitute a KH-like domain.

Belongs to the TRAFAC class TrmE-Era-EngA-EngB-Septin-like GTPase superfamily. EngA (Der) GTPase family. In terms of assembly, associates with the 50S ribosomal subunit.

In terms of biological role, GTPase that plays an essential role in the late steps of ribosome biogenesis. The polypeptide is GTPase Der (Nitrobacter winogradskyi (strain ATCC 25391 / DSM 10237 / CIP 104748 / NCIMB 11846 / Nb-255)).